The primary structure comprises 233 residues: Large ribosomal subunit protein uL1 (233 aa).

This sequence belongs to the universal ribosomal protein uL1 family. Part of the 50S ribosomal subunit.

Functionally, binds directly to 23S rRNA. The L1 stalk is quite mobile in the ribosome, and is involved in E site tRNA release. Protein L1 is also a translational repressor protein, it controls the translation of the L11 operon by binding to its mRNA. The protein is Large ribosomal subunit protein uL1 of Novosphingobium aromaticivorans (strain ATCC 700278 / DSM 12444 / CCUG 56034 / CIP 105152 / NBRC 16084 / F199).